Here is a 756-residue protein sequence, read N- to C-terminus: Zinc finger and BTB domain-containing protein 49 (756 aa).

The BTB domain occupies 25-91 (CDCMLVVRGV…MYTSRLDLNQ (67 aa)). 3 disordered regions span residues 176-197 (APSA…GGSC), 226-290 (PSQV…LSEP), and 311-379 (SQQS…PSQA). The span at 226 to 242 (PSQVPATQQPLTRSAST) shows a compositional bias: polar residues. Composition is skewed to basic and acidic residues over residues 319–341 (SHPE…DAVE) and 348–365 (AEEK…REEE). C2H2-type zinc fingers lie at residues 386 to 408 (YACE…KRSH), 414 to 436 (FECN…LRRH), 442 to 464 (YICE…IIIH), 470 to 492 (HLCD…KKTH), 498 to 520 (FTCD…RVRH), 526 to 548 (YSCP…VRTH), and 554 to 576 (YSCE…KRMH).

This sequence belongs to the krueppel C2H2-type zinc-finger protein family. As to quaternary structure, interacts with EP300, KAT5/Tip60 and ZBTB17. The interaction with EP300 is direct and leads to synergistic induction of CDKN1A. On the CDKN1A promoter, forms a complex with ZBTB17; this interaction leads to additive CDKN1A transactivation. The interaction with ZBTB17 may block ZBTB17 repressor activity. Widely expressed, with highest levels in white adipose tissue and kidney, intermediate levels in brain, liver and heart, and lowest levels in spleen, brown adipose tissue and muscle.

The protein resides in the cytoplasm. The protein localises to the nucleus. Transcription factor. Inhibits cell proliferation by activating either CDKN1A/p21 transcription or RB1 transcription. In Mus musculus (Mouse), this protein is Zinc finger and BTB domain-containing protein 49 (Zbtb49).